A 229-amino-acid polypeptide reads, in one-letter code: Thylakoid lumenal 19 kDa protein, chloroplastic (229 aa).

The protein resides in the plastid. The protein localises to the chloroplast thylakoid lumen. In Arabidopsis thaliana (Mouse-ear cress), this protein is Thylakoid lumenal 19 kDa protein, chloroplastic.